The sequence spans 701 residues: Elongation factor G (701 aa).

The tr-type G domain occupies 8-291; the sequence is GRYRNIGIVA…AVIDYLPAPT (284 aa). Residues 17 to 24, 89 to 93, and 143 to 146 contribute to the GTP site; these read AHVDAGKT, DTPGH, and NKMD.

This sequence belongs to the TRAFAC class translation factor GTPase superfamily. Classic translation factor GTPase family. EF-G/EF-2 subfamily.

The protein resides in the cytoplasm. Functionally, catalyzes the GTP-dependent ribosomal translocation step during translation elongation. During this step, the ribosome changes from the pre-translocational (PRE) to the post-translocational (POST) state as the newly formed A-site-bound peptidyl-tRNA and P-site-bound deacylated tRNA move to the P and E sites, respectively. Catalyzes the coordinated movement of the two tRNA molecules, the mRNA and conformational changes in the ribosome. This chain is Elongation factor G, found in Pseudomonas syringae pv. syringae (strain B728a).